The primary structure comprises 639 residues: Carbon monoxide dehydrogenase (639 aa).

6 residues coordinate [4Fe-4S] cluster: Cys41, Cys49, Cys50, Cys53, Cys58, and Cys72. 6 residues coordinate [Ni-4Fe-4S] cluster: His265, Cys300, Cys338, Cys451, Cys481, and Cys531.

Belongs to the Ni-containing carbon monoxide dehydrogenase family. As to quaternary structure, homodimer. Requires [4Fe-4S] cluster as cofactor. The cofactor is [Ni-4Fe-4S] cluster.

It is found in the cytoplasm. It localises to the cell inner membrane. It carries out the reaction CO + 2 oxidized [2Fe-2S]-[ferredoxin] + H2O = 2 reduced [2Fe-2S]-[ferredoxin] + CO2 + 2 H(+). Its function is as follows. Allows growth in a CO-dependent manner in the dark. CODH oxidizes carbon monoxide coupled, via CooF, to the reduction of a hydrogen cation by a hydrogenase (possibly CooH). This is Carbon monoxide dehydrogenase (cooS) from Rhodospirillum rubrum.